Consider the following 334-residue polypeptide: HTH-type transcriptional regulator RegA (334 aa).

The HTH lacI-type domain maps to 1–57 (MAASIKDVAREARVSIATVSRVLNNVDVVNEETKKKVMEAIKKLDYRPNIVARSLKT). Positions 5 to 24 (IKDVAREARVSIATVSRVLN) form a DNA-binding region, H-T-H motif.

Involved in the regulation of amylase production. The chain is HTH-type transcriptional regulator RegA (regA) from Clostridium acetobutylicum (strain ATCC 824 / DSM 792 / JCM 1419 / IAM 19013 / LMG 5710 / NBRC 13948 / NRRL B-527 / VKM B-1787 / 2291 / W).